Reading from the N-terminus, the 364-residue chain is Deoxyribonuclease-2-alpha (364 aa).

Positions 1 to 21 are cleaved as a signal peptide; that stretch reads MATLSPLLLAALLWVPVGTLT. An intrachain disulfide couples C22 to C161. N-linked (GlcNAc...) asparagine glycans are attached at residues N72, N88, N171, N214, N268, and N292. Disulfide bonds link C269–C349 and C310–C329. The active site involves H297.

Belongs to the DNase II family.

Its subcellular location is the lysosome. It carries out the reaction Endonucleolytic cleavage to nucleoside 3'-phosphates and 3'-phosphooligonucleotide end-products.. Functionally, hydrolyzes DNA under acidic conditions with a preference for double-stranded DNA. Plays a major role in the clearance of nucleic acids generated through apoptosis, hence preventing autoinflammation. Necessary for proper fetal development and for definitive erythropoiesis in fetal liver and bone marrow, where it degrades nuclear DNA expelled from erythroid precursor cells. This Sus scrofa (Pig) protein is Deoxyribonuclease-2-alpha (DNASE2).